A 212-amino-acid polypeptide reads, in one-letter code: MDTPLLNFRKVHFVTSAPDIRHLPNDGGIEIAFAGRSNAGKSSALNALTQQRQLARTSKTPGRTQLINLFELEPGKRLVDLPGYGYAQVPIEMKLKWQAALSEYLQKRESLKALVLLMDIRHPLKDLDLQMLEWASNSDLNILVLLTKADKLNPGPRKTVVQQVRKATMVFGDSVRVEAFSSLKGTGVDEVTRILSDWYQPEDTPDEISEAE.

One can recognise an EngB-type G domain in the interval Gly27 to Pro201. GTP-binding positions include Gly35–Ser42, Gly62–Leu66, Asp80–Gly83, Thr147–Asp150, and Phe180–Ser182. 2 residues coordinate Mg(2+): Ser42 and Thr64.

The protein belongs to the TRAFAC class TrmE-Era-EngA-EngB-Septin-like GTPase superfamily. EngB GTPase family. Mg(2+) is required as a cofactor.

In terms of biological role, necessary for normal cell division and for the maintenance of normal septation. In Tolumonas auensis (strain DSM 9187 / NBRC 110442 / TA 4), this protein is Probable GTP-binding protein EngB.